The sequence spans 1442 residues: Sulfite reductase [NADPH] subunit beta (1442 aa).

A Flavodoxin-like domain is found at 682–831; the sequence is LHVYYASDGG…AYSEWEPKLW (150 aa). A Phosphoserine modification is found at S903. [4Fe-4S] cluster is bound by residues C1300, C1306, C1345, and C1349. C1349 is a siroheme binding site.

This sequence belongs to the nitrite and sulfite reductase 4Fe-4S domain family. In terms of assembly, alpha(2)-beta(2). The alpha component is a flavoprotein, the beta component is a hemoprotein. Siroheme serves as cofactor. It depends on [4Fe-4S] cluster as a cofactor.

It localises to the cytoplasm. It carries out the reaction hydrogen sulfide + 3 NADP(+) + 3 H2O = sulfite + 3 NADPH + 4 H(+). Its pathway is sulfur metabolism; hydrogen sulfide biosynthesis; hydrogen sulfide from sulfite (NADPH route): step 1/1. Functionally, catalyzes the reduction of sulfite to sulfide, one of several activities required for the biosynthesis of L-cysteine from sulfate. The sequence is that of Sulfite reductase [NADPH] subunit beta (MET5) from Saccharomyces cerevisiae (strain ATCC 204508 / S288c) (Baker's yeast).